A 337-amino-acid polypeptide reads, in one-letter code: Ferrochelatase (337 aa).

The Fe cation site is built by H189 and E293.

Belongs to the ferrochelatase family.

The protein localises to the cytoplasm. It carries out the reaction heme b + 2 H(+) = protoporphyrin IX + Fe(2+). It functions in the pathway porphyrin-containing compound metabolism; protoheme biosynthesis; protoheme from protoporphyrin-IX: step 1/1. In terms of biological role, catalyzes the ferrous insertion into protoporphyrin IX. The protein is Ferrochelatase of Pseudomonas putida (strain W619).